We begin with the raw amino-acid sequence, 238 residues long: Fmr1 neighbor protein (238 aa).

Positions M1 to D30 are disordered. The Cytoplasmic segment spans residues M1–H79. Residues K15 to D30 are compositionally biased toward basic and acidic residues. Residues L80–A100 form a helical membrane-spanning segment. The Extracellular portion of the chain corresponds to K101–R178. The region spanning M118–V176 is the P-type domain. A helical transmembrane segment spans residues V179–S199. Residues M200–H238 are Cytoplasmic-facing. Positions L214–R227 are enriched in basic residues. The disordered stretch occupies residues L214–H238. Over residues K228 to H238 the composition is skewed to basic and acidic residues.

The protein resides in the membrane. The chain is Fmr1 neighbor protein from Mus musculus (Mouse).